Here is a 229-residue protein sequence, read N- to C-terminus: Probable methylthioribulose-1-phosphate dehydratase (229 aa).

Cys97 contributes to the substrate binding site. Residues His115 and His117 each coordinate Zn(2+). Residue Glu139 is the Proton donor/acceptor of the active site. His195 is a binding site for Zn(2+).

Belongs to the aldolase class II family. MtnB subfamily. Zn(2+) serves as cofactor.

It localises to the cytoplasm. It catalyses the reaction 5-(methylsulfanyl)-D-ribulose 1-phosphate = 5-methylsulfanyl-2,3-dioxopentyl phosphate + H2O. The protein operates within amino-acid biosynthesis; L-methionine biosynthesis via salvage pathway; L-methionine from S-methyl-5-thio-alpha-D-ribose 1-phosphate: step 2/6. Catalyzes the dehydration of methylthioribulose-1-phosphate (MTRu-1-P) into 2,3-diketo-5-methylthiopentyl-1-phosphate (DK-MTP-1-P). The chain is Probable methylthioribulose-1-phosphate dehydratase from Acyrthosiphon pisum (Pea aphid).